Here is an 88-residue protein sequence, read N- to C-terminus: Small ribosomal subunit protein bS20 (88 aa).

Residues 1–23 (MPNTKSAEKALRVADANRQENRR) show a composition bias toward basic and acidic residues. Disordered regions lie at residues 1 to 28 (MPNTKSAEKALRVADANRQENRRAKSQV) and 69 to 88 (PKNAARRKSRLMKKLNQAAK). Positions 71–81 (NAARRKSRLMK) are enriched in basic residues.

This sequence belongs to the bacterial ribosomal protein bS20 family.

Functionally, binds directly to 16S ribosomal RNA. The chain is Small ribosomal subunit protein bS20 from Dehalococcoides mccartyi (strain ATCC BAA-2266 / KCTC 15142 / 195) (Dehalococcoides ethenogenes (strain 195)).